The chain runs to 196 residues: Probable malonic semialdehyde reductase RutE (196 aa).

The protein belongs to the nitroreductase family. HadB/RutE subfamily. FMN serves as cofactor.

It carries out the reaction 3-hydroxypropanoate + NADP(+) = 3-oxopropanoate + NADPH + H(+). May reduce toxic product malonic semialdehyde to 3-hydroxypropionic acid, which is excreted. The polypeptide is Probable malonic semialdehyde reductase RutE (Escherichia coli O8 (strain IAI1)).